The primary structure comprises 140 residues: Putative septation protein SpoVG (140 aa).

Residues 88 to 127 (VAPQAGGLQGAEEPTAVEPAPQLQDESELPWEPGDDGEGA) form a disordered region. Over residues 112 to 124 (DESELPWEPGDDG) the composition is skewed to acidic residues.

It belongs to the SpoVG family.

In terms of biological role, could be involved in septation. This is Putative septation protein SpoVG from Symbiobacterium thermophilum (strain DSM 24528 / JCM 14929 / IAM 14863 / T).